A 398-amino-acid chain; its full sequence is MKKIMAINAGSSSLKFQLFEMPEEKVLTKGLVERIGLPNSIFTISVNGEKITQTLDIKNHEQAVDMMLDEMKKHGIIQDINDLDGTGHRVVQGGDIFETSALVTDEVEKQIEELCELAPLHNPANLMGIRAFRKMLPNIPHVAIFDTSFHTTMPEEAFLYSLPYKYYQDYGIRKYGAHGTSHKFVAERAAELLDRPIEQLRIITCHIGNGASIAAVEGGKSVDTSMGFTPLAGVTMGTRSGNLDPAIIPFLMEKTGKTAQEVINVLNKESGLLGISGISSDLRDIEQKAEEGDERAILALDVFASRIHKYIGSYATRMKGLDAIVFTAGVGENSDIVRARVLEGLEFMGVYWDPKLNAGLRGKEAFINYPHSPVKVMVIPTDEEVMIARDTMTFGNLK.

A Mg(2+)-binding site is contributed by asparagine 8. Lysine 15 serves as a coordination point for ATP. Residue arginine 89 participates in substrate binding. Catalysis depends on aspartate 146, which acts as the Proton donor/acceptor. ATP contacts are provided by residues 206-210, 281-283, and 329-333; these read HIGNG, DLR, and GVGEN. Glutamate 383 provides a ligand contact to Mg(2+).

It belongs to the acetokinase family. As to quaternary structure, homodimer. Mg(2+) is required as a cofactor. Requires Mn(2+) as cofactor.

It localises to the cytoplasm. The catalysed reaction is acetate + ATP = acetyl phosphate + ADP. The protein operates within metabolic intermediate biosynthesis; acetyl-CoA biosynthesis; acetyl-CoA from acetate: step 1/2. In terms of biological role, catalyzes the formation of acetyl phosphate from acetate and ATP. Can also catalyze the reverse reaction. The protein is Acetate kinase of Macrococcus caseolyticus (strain JCSC5402) (Macrococcoides caseolyticum).